A 1021-amino-acid polypeptide reads, in one-letter code: Phytosulfokine receptor 1 (1021 aa).

Residues 1–24 (MGVLRVYVILILVGFCVQIVVVNS) form the signal peptide. One copy of the LRR 1 repeat lies at 21–43 (VVNSQNLTCNSNDLKALEGFMRG). Residues asparagine 26, asparagine 54, and asparagine 83 are each glycosylated (N-linked (GlcNAc...) asparagine). LRR repeat units lie at residues 85–109 (SGRVVELELGRRKLSGKLSESVAKL), 110–133 (DQLKVLNLTHNSLSGSIAASLLNL), 135–156 (NLEVLDLSSNDFSGLFPSLINL), 158–180 (SLRVLNVYENSFHGLIPASLCNN), 181–205 (LPRIREIDLAMNYFDGSIPVGIGNC), 206–229 (SSVEYLGLASNNLSGSIPQELFQL), 231–252 (NLSVLALQNNRLSGALSSKLGK), 253–277 (LSNLGRLDISSNKFSGKIPDVFLEL), 301–325 (SRSISLLSLRNNTLSGQIYLNCSAM), 326–349 (TNLTSLDLASNSFSGSIPSNLPNC), 351–372 (RLKTINFAKIKFIAQIPESFKN), 373–397 (FQSLTSLSFSNSSIQNISSALEILQ), 402–426 (LKTLVLTLNFQKEELPSVPSLQFKN), 428–448 (KVLIIASCQLRGTVPQWLSNS), 449–474 (PSLQLLDLSWNQLSGTIPPWLGSLNS), and 476–496 (FYLDLSNNTFIGEIPHSLTSL). N-linked (GlcNAc...) asparagine glycosylation is found at asparagine 116 and asparagine 132. 3 N-linked (GlcNAc...) asparagine glycosylation sites follow: asparagine 204, asparagine 217, and asparagine 231. Asparagine 311, asparagine 321, and asparagine 327 each carry an N-linked (GlcNAc...) asparagine glycan. N-linked (GlcNAc...) asparagine glycosylation is found at asparagine 383 and asparagine 388. Residues asparagine 482, asparagine 546, asparagine 568, asparagine 576, and asparagine 592 are each glycosylated (N-linked (GlcNAc...) asparagine). One copy of the LRR 18; atypical repeat lies at 498–555 (SLVSKENAVEEPSPDFPFFKKKNTNAGGLQYNQPSSFPPMIDLSYNSLNGSIWPEFGD). LRR repeat units lie at residues 556–580 (LRQLHVLNLKNNNLSGNIPANLSGM), 581–604 (TSLEVLDLSHNNLSGNIPPSLVKL), and 606–629 (FLSTFSVAYNKLSGPIPTGVQFQT). An N-linked (GlcNAc...) asparagine glycan is attached at asparagine 632. The helical transmembrane segment at 673-693 (VAVGTGLGTVFLLTVTLLIIL) threads the bilayer. One can recognise a Protein kinase domain in the interval 743–1014 (FNQANIIGCG…PTTQQLVSWL (272 aa)). ATP contacts are provided by residues 749–757 (IGCGGFGLV) and lysine 771. The active-site Proton acceptor is the aspartate 869.

The protein belongs to the protein kinase superfamily. Ser/Thr protein kinase family. In terms of processing, N-glycosylated. Expressed ubiquitously in leaf, apical meristem, hypocotyl and root.

Its subcellular location is the cell membrane. The catalysed reaction is L-seryl-[protein] + ATP = O-phospho-L-seryl-[protein] + ADP + H(+). It catalyses the reaction L-threonyl-[protein] + ATP = O-phospho-L-threonyl-[protein] + ADP + H(+). Its function is as follows. Phytosulfokine receptor with a serine/threonine-protein kinase activity. Regulates, in response to phytosulfokine binding, a signaling cascade involved in plant cell differentiation, organogenesis and somatic embryogenesis. The chain is Phytosulfokine receptor 1 (PSKR) from Daucus carota (Wild carrot).